Consider the following 296-residue polypeptide: Transcription factor bHLH99 (296 aa).

Residues 99–150 enclose the bHLH domain; it reads NQRMNHIAVERNRRKQMNHFLSILKSMMPLSYSQPNDQASIIEGTISYLKKL.

In terms of assembly, homodimer. Expressed constitutively in roots, stems, and flowers.

Its subcellular location is the nucleus. In Arabidopsis thaliana (Mouse-ear cress), this protein is Transcription factor bHLH99 (BHLH99).